Here is a 137-residue protein sequence, read N- to C-terminus: MVGYHQTNQKTDTGKTLTRRPVLVDHNRLPEGSRGRLAVAVAGDHPAAVQVTMTLVNDTGFDPVFSGSIAESWRQQPCTPSYCCDWEAATMLRAFPLAKKGEGRARLPSLYASFGKLGETPTHEDIIDNNRSINWPV.

Residues Met-1–Thr-16 show a composition bias toward polar residues. A disordered region spans residues Met-1–Arg-20.

The chain is Putative protein YjhV (yjhV) from Escherichia coli (strain K12).